Here is a 171-residue protein sequence, read N- to C-terminus: Endoribonuclease YbeY (171 aa).

Residues His-130, His-134, and His-140 each contribute to the Zn(2+) site.

This sequence belongs to the endoribonuclease YbeY family. Zn(2+) is required as a cofactor.

It is found in the cytoplasm. Single strand-specific metallo-endoribonuclease involved in late-stage 70S ribosome quality control and in maturation of the 3' terminus of the 16S rRNA. The sequence is that of Endoribonuclease YbeY from Neisseria meningitidis serogroup C / serotype 2a (strain ATCC 700532 / DSM 15464 / FAM18).